The following is a 453-amino-acid chain: tRNA modification GTPase MnmE (453 aa).

Residues Arg-22, Glu-79, and Lys-119 each contribute to the (6S)-5-formyl-5,6,7,8-tetrahydrofolate site. In terms of domain architecture, TrmE-type G spans 215–376; it reads GMKVVIAGRP…LQQHLKSLMG (162 aa). K(+) is bound at residue Asn-225. Residues 225 to 230, 244 to 250, 269 to 272, and 334 to 337 each bind GTP; these read NAGKSS, TEIAGTT, DTAG, and NKAD. Ser-229 contacts Mg(2+). Residues Thr-244, Ile-246, and Thr-249 each coordinate K(+). Thr-250 provides a ligand contact to Mg(2+). Residue Lys-453 participates in (6S)-5-formyl-5,6,7,8-tetrahydrofolate binding.

It belongs to the TRAFAC class TrmE-Era-EngA-EngB-Septin-like GTPase superfamily. TrmE GTPase family. As to quaternary structure, homodimer. Heterotetramer of two MnmE and two MnmG subunits. It depends on K(+) as a cofactor.

Its subcellular location is the cytoplasm. Functionally, exhibits a very high intrinsic GTPase hydrolysis rate. Involved in the addition of a carboxymethylaminomethyl (cmnm) group at the wobble position (U34) of certain tRNAs, forming tRNA-cmnm(5)s(2)U34. The chain is tRNA modification GTPase MnmE from Shewanella woodyi (strain ATCC 51908 / MS32).